The chain runs to 144 residues: 3-dehydroquinate dehydratase (144 aa).

Y23 functions as the Proton acceptor in the catalytic mechanism. Residues N74, H80, and D87 each contribute to the substrate site. The active-site Proton donor is the H101. Substrate contacts are provided by residues 102 to 103 and R112; that span reads LS.

This sequence belongs to the type-II 3-dehydroquinase family. As to quaternary structure, homododecamer.

It catalyses the reaction 3-dehydroquinate = 3-dehydroshikimate + H2O. The protein operates within metabolic intermediate biosynthesis; chorismate biosynthesis; chorismate from D-erythrose 4-phosphate and phosphoenolpyruvate: step 3/7. Catalyzes a trans-dehydration via an enolate intermediate. This is 3-dehydroquinate dehydratase from Mesorhizobium japonicum (strain LMG 29417 / CECT 9101 / MAFF 303099) (Mesorhizobium loti (strain MAFF 303099)).